The chain runs to 264 residues: Undecaprenyl-diphosphatase (264 aa).

7 helical membrane passes run 34 to 54 (LLNL…MGSI), 75 to 95 (LLYL…LYII), 104 to 124 (YDPS…GLYI), 137 to 157 (LSLK…LPGV), 180 to 200 (YSYL…ILFS), 207 to 227 (VISL…FIIG), and 243 to 263 (IYII…LTIL).

Belongs to the UppP family.

The protein resides in the cell membrane. The catalysed reaction is di-trans,octa-cis-undecaprenyl diphosphate + H2O = di-trans,octa-cis-undecaprenyl phosphate + phosphate + H(+). Catalyzes the dephosphorylation of undecaprenyl diphosphate (UPP). The protein is Undecaprenyl-diphosphatase of Sulfurisphaera tokodaii (strain DSM 16993 / JCM 10545 / NBRC 100140 / 7) (Sulfolobus tokodaii).